Consider the following 301-residue polypeptide: Pantothenate synthetase (301 aa).

Residue 30-37 (MGNLHEGH) participates in ATP binding. H37 serves as the catalytic Proton donor. Q61 provides a ligand contact to (R)-pantoate. Beta-alanine is bound at residue Q61. 149–152 (GEKD) contacts ATP. Q155 is a (R)-pantoate binding site. ATP-binding positions include V178 and 186–189 (MSSR).

The protein belongs to the pantothenate synthetase family. In terms of assembly, homodimer.

The protein localises to the cytoplasm. It catalyses the reaction (R)-pantoate + beta-alanine + ATP = (R)-pantothenate + AMP + diphosphate + H(+). It participates in cofactor biosynthesis; (R)-pantothenate biosynthesis; (R)-pantothenate from (R)-pantoate and beta-alanine: step 1/1. Catalyzes the condensation of pantoate with beta-alanine in an ATP-dependent reaction via a pantoyl-adenylate intermediate. The chain is Pantothenate synthetase from Vibrio vulnificus (strain YJ016).